A 358-amino-acid polypeptide reads, in one-letter code: Fructose-bisphosphate aldolase 2, cytoplasmic (358 aa).

Position 39 (Arg-39) interacts with substrate. Catalysis depends on Glu-183, which acts as the Proton acceptor. Lys-225 acts as the Schiff-base intermediate with dihydroxyacetone-P in catalysis. Substrate-binding positions include 266–268 (SGG) and Arg-298.

This sequence belongs to the class I fructose-bisphosphate aldolase family. As to quaternary structure, homotetramer.

The protein localises to the cytoplasm. It localises to the cytosol. It carries out the reaction beta-D-fructose 1,6-bisphosphate = D-glyceraldehyde 3-phosphate + dihydroxyacetone phosphate. It functions in the pathway carbohydrate degradation; glycolysis; D-glyceraldehyde 3-phosphate and glycerone phosphate from D-glucose: step 4/4. In terms of biological role, fructose-bisphosphate aldolase that plays a key role in glycolysis and gluconeogenesis. The polypeptide is Fructose-bisphosphate aldolase 2, cytoplasmic (Oryza sativa subsp. japonica (Rice)).